The sequence spans 499 residues: MFKKIMKGGHRKPSKSEANEPSSYGIGLPDNRSGPGSNVVVSHASRGALVNSSPSPVTATPPPPPLGSVEPLPLFRDVPVSERQTLFLRKLQNCCFLFDFTDTIKNARDKEIKRQTLLELVDFIQSGSSKISESCQEEMIKMISVNIFRSLPPASHENTGQEPADPEEEEPYLEPSWPHLQLVYELLLRYVVSTDTDTKVAKRYIDHSFVLKLLDLFDSEDPREREYLKTILHRIYGKFMVHRPFIRKAINNIFYRFIYETERHSGIGELLEILGSIINGFALPMKEEHKLFLIRVLIPLHKPKPIVVYHQQLSYCIVQFVEKDYKLADTVIRGLLKYWPVTNCSKENLFLGELEEVLEATQPVEFQRCMVPLFQQIGRCLTSSHFQVAERALFLWNNEHIVGLIAQNRSVILPIIYPTLEKNIQSHWNQAVHGLTTNIKKMFMEMDPELFEECQRQYEEKQAKSKEVEEQRQYTWKRLAEAAAERDGGGGEEDHMITS.

Residues 1–13 (MFKKIMKGGHRKP) are compositionally biased toward basic residues. Residues 1–65 (MFKKIMKGGH…PVTATPPPPP (65 aa)) form a disordered region.

It belongs to the phosphatase 2A regulatory subunit B56 family. As to quaternary structure, PP2A consists of a common heteromeric enzyme, composed of a catalytic subunit (subunits C), a constant regulatory subunit (subunit A), and a variety of regulatory subunits such as subunits B (the R2/B/PR55/B55, R3/B''/PR72/PR130/PR59 and R5/B'/B56 families). Interacts with BZR1. Interacts with BRI1. Interacts with SRK2E/OST1. Expressed ubiquitously, higher levels in cotyledons and flowers.

The protein resides in the nucleus. It localises to the cytoplasm. Its function is as follows. The B regulatory subunit may modulate substrate selectivity and catalytic activity, and may also direct the localization of the catalytic enzyme to a particular subcellular compartment. Required for the formation of the PP2A holoenzyme that positively regulates brassinosteroid signaling by dephosphorylating and activating BZR1. The chain is Serine/threonine protein phosphatase 2A 57 kDa regulatory subunit B' beta isoform (B'BETA) from Arabidopsis thaliana (Mouse-ear cress).